The following is a 418-amino-acid chain: MKKEEMIQKAYEIAVERYAAVGVDTEKVLKTMQDFHLSLHCWQADDVTGFEVQAGALSGGIQATGNYPGKARNIDELRADILKAASYIPGTHRLNLHEIYGDFQGKVVDRDQVEPEHFKSWIEWGKEHNMKLDFNSTSFSHPKSGDLSLSNPDEGIRQFWIEHTKRCRAVAEEMGKAQGDPCIMNLWVHDGSKDITVNRMKYRALLKDSLDQIFATEYKNMKDCIESKVFGIGLESYTVGSNDFYIGYGASRNKMVTLDTGHFHPTESVADKVSSLLLYVPELMLHVSRPVRWDSDHVTIMDDPTMELFSEIVRCGALERVHYGLDYFDASINRIGAYVIGSRAAQKCMTRALLEPIAKLREYEANGQGFQRLALLEEEKALPWNAVWDMFCLKNNVPVGEDFIAEIEKYEAEVTSKR.

Mn(2+) contacts are provided by His-262, Asp-294, and Asp-296.

The protein belongs to the rhamnose isomerase family. The cofactor is Mn(2+).

The protein localises to the cytoplasm. It carries out the reaction L-rhamnopyranose = L-rhamnulose. It participates in carbohydrate degradation; L-rhamnose degradation; glycerone phosphate from L-rhamnose: step 1/3. In terms of biological role, catalyzes the interconversion of L-rhamnose and L-rhamnulose. This chain is L-rhamnose isomerase, found in Bacteroides thetaiotaomicron (strain ATCC 29148 / DSM 2079 / JCM 5827 / CCUG 10774 / NCTC 10582 / VPI-5482 / E50).